An 87-amino-acid chain; its full sequence is Small ribosomal subunit protein bS20 (87 aa).

The span at 1–22 shows a compositional bias: basic residues; sequence MANIKSAKKRAVQSEKRRKHNA. Residues 1–27 are disordered; that stretch reads MANIKSAKKRAVQSEKRRKHNASSRSM.

This sequence belongs to the bacterial ribosomal protein bS20 family.

Binds directly to 16S ribosomal RNA. In Pectobacterium atrosepticum (strain SCRI 1043 / ATCC BAA-672) (Erwinia carotovora subsp. atroseptica), this protein is Small ribosomal subunit protein bS20.